A 140-amino-acid chain; its full sequence is Endoribonuclease YbeY (140 aa).

The Zn(2+) site is built by H100, H104, and H110.

Belongs to the endoribonuclease YbeY family. Requires Zn(2+) as cofactor.

It is found in the cytoplasm. In terms of biological role, single strand-specific metallo-endoribonuclease involved in late-stage 70S ribosome quality control and in maturation of the 3' terminus of the 16S rRNA. The sequence is that of Endoribonuclease YbeY from Helicobacter pylori (strain ATCC 700392 / 26695) (Campylobacter pylori).